The sequence spans 236 residues: 3-deoxy-D-manno-octulosonic acid kinase (236 aa).

Residue Asp167 is part of the active site.

Belongs to the protein kinase superfamily. KdkA/RfaP family.

The protein resides in the cell inner membrane. The catalysed reaction is an alpha-Kdo-(2-&gt;6)-lipid IVA + ATP = a 4-O-phospho-alpha-Kdo-(2-&gt;6)-lipid IVA + ADP + H(+). It participates in bacterial outer membrane biogenesis; LPS core biosynthesis. Catalyzes the ATP-dependent phosphorylation of the 3-deoxy-D-manno-octulosonic acid (Kdo) residue in Kdo-lipid IV(A) at the 4-OH position. The sequence is that of 3-deoxy-D-manno-octulosonic acid kinase from Vibrio vulnificus (strain YJ016).